The sequence spans 540 residues: Phosphatidylinositol 4-phosphate 5-kinase type-1 beta (540 aa).

A disordered region spans residues 1-23 (MSSVTENGDVTAGKPNEEKTYKK). The region spanning 25-395 (TSSAIKGAIQ…RFLKFMNTRV (371 aa)) is the PIPK domain.

The protein localises to the cytoplasm. It is found in the cytosol. The protein resides in the cell membrane. It localises to the endomembrane system. The enzyme catalyses a 1,2-diacyl-sn-glycero-3-phospho-(1D-myo-inositol 4-phosphate) + ATP = a 1,2-diacyl-sn-glycero-3-phospho-(1D-myo-inositol-4,5-bisphosphate) + ADP + H(+). It catalyses the reaction 1-octadecanoyl-2-(5Z,8Z,11Z,14Z)-eicosatetraenoyl-sn-glycero-3-phospho-1D-myo-inositol 4-phosphate + ATP = 1-octadecanoyl-2-(5Z,8Z,11Z,14Z)-eicosatetraenoyl-sn-glycero-3-phospho-1D-myo-inositol 4,5-bisphosphate + ADP + H(+). The catalysed reaction is 1-octadecanoyl-2-(9Z)-octadecenoyl-sn-glycero-3-phospho-1D-myo-inositol 4-phosphate + ATP = 1-octadecanoyl-2-(9Z)-octadecenoyl-sn-glycero-3-phospho-1D-myo-inositol 4,5-bisphosphate + ADP + H(+). It carries out the reaction 1-octadecanoyl-2-(9Z)-octadecenoyl-sn-glycero-3-phospho-1D-myo-inositol + ATP = 1-octadecanoyl-2-(9Z)-octadecenoyl-sn-glycero-3-phospho-1D-myo-inositol 5-phosphate + ADP + H(+). The enzyme catalyses 1-octadecanoyl-2-(9Z,12Z)-octadecadienoyl-sn-glycero-3-phospho-1D-myo-inositol + ATP = 1-octadecanoyl-2-(9Z,12Z)-octadecadienoyl-sn-glycero-3-phospho-1D-myo-inositol 5-phosphate + ADP + H(+). It catalyses the reaction 1-octadecanoyl-2-(5Z,8Z,11Z,14Z-eicosatetraenoyl)-sn-glycero-3-phospho-(1D-myo-inositol) + ATP = 1-octadecanoyl-2-(5Z,8Z,11Z,14Z)-eicosatetraenoyl-sn-glycero-3-phospho-1D-myo-inositol 5-phosphate + ADP + H(+). The catalysed reaction is 1,2-di-(9Z,12Z)-octadecadienoyl-sn-glycero-3-phospho-1D-myo-inositol + ATP = 1,2-di(9Z,12Z)-octadecadienoyl-sn-glycero-3-phospho-1D-myo-inositol 5-phosphate + ADP + H(+). Its function is as follows. Catalyzes the phosphorylation of phosphatidylinositol 4-phosphate (PtdIns(4)P/PI4P) to form phosphatidylinositol 4,5-bisphosphate (PtdIns(4,5)P2/PIP2), a lipid second messenger that regulates several cellular processes such as signal transduction, vesicle trafficking, actin cytoskeleton dynamics, cell adhesion, and cell motility. PtdIns(4,5)P2 can directly act as a second messenger or can be utilized as a precursor to generate other second messengers: inositol 1,4,5-trisphosphate (IP3), diacylglycerol (DAG) or phosphatidylinositol-3,4,5-trisphosphate (PtdIns(3,4,5)P3/PIP3). The polypeptide is Phosphatidylinositol 4-phosphate 5-kinase type-1 beta (PIP5K1B) (Gallus gallus (Chicken)).